The sequence spans 336 residues: Opsin-1, short-wave-sensitive 1 (336 aa).

Topologically, residues 1-29 are extracellular; that stretch reads MDAWAVQFGNASKVSPFEGEQYHIAPKWA. N10 is a glycosylation site (N-linked (GlcNAc...) asparagine). Residues 30 to 54 traverse the membrane as a helical segment; it reads FYLQAAFMGFVFIVGTPMNGIVLFV. The Cytoplasmic segment spans residues 55-66; the sequence is TMKYKKLRQPLN. Residues 67–91 traverse the membrane as a helical segment; it reads YILVNISLAGFIFDTFSVSQVFVCA. Topologically, residues 92–106 are extracellular; sequence ARGYYFLGYTLCAME. C103 and C180 form a disulfide bridge. A helical membrane pass occupies residues 107-126; sequence AAMGSIAGLVTGWSLAVLAF. The Cytoplasmic segment spans residues 127-145; sequence ERYVVICKPFGSFKFGQGQ. Residues 146 to 169 traverse the membrane as a helical segment; that stretch reads AVGAVVFTWIIGTACATPPFFGWS. Topologically, residues 170-195 are extracellular; that stretch reads RYIPEGLGTACGPDWYTKSEEYNSES. Residues 196–223 traverse the membrane as a helical segment; sequence YTYFLLITCFMMPMTIIIFSYSQLLGAL. Residues 224 to 245 lie on the Cytoplasmic side of the membrane; sequence RAVAAQQAESESTQKAEREVSR. A helical membrane pass occupies residues 246–269; sequence MVVVMVGSFVLCYAPYAVTAMYFA. Over 270–277 the chain is Extracellular; it reads NSDEPNKD. A helical membrane pass occupies residues 278-302; it reads YRLVAIPAFFSKSSCVYNPLIYAFM. K289 is subject to N6-(retinylidene)lysine. Over 303–336 the chain is Cytoplasmic; the sequence is NKQFNACIMETVFGKKIDESSEVSSKTETSSVSA.

It belongs to the G-protein coupled receptor 1 family. Opsin subfamily. In terms of processing, phosphorylated on some or all of the serine and threonine residues present in the C-terminal region. As to expression, retinal short single cones, outer and inner segments.

It is found in the membrane. Its function is as follows. Visual pigments are the light-absorbing molecules that mediate vision. They consist of an apoprotein, opsin, covalently linked to cis-retinal. The sequence is that of Opsin-1, short-wave-sensitive 1 (opn1sw1) from Danio rerio (Zebrafish).